The chain runs to 220 residues: Zip homologous protein 1 (220 aa).

The RING-type zinc finger occupies 6-44; sequence CNGCGCSPSKRQFFITACSHVFCETCRTTPTADFCHLCK. Residues 124–155 adopt a coiled-coil conformation; that stretch reads LTSFEENNRKKLEDIERENEKLRNLISALELK. 2 disordered regions span residues 166 to 186 and 201 to 220; these read EFFMQGTPTSSNPSVAGSDVD and RSDSSSSNCSSQSNRGGSLF. A compositionally biased stretch (polar residues) spans 171-180; sequence GTPTSSNPSV.

Interacts with zhp-2; the interaction is required for their chromosome association and stability. In terms of tissue distribution, expressed in the germline.

The protein resides in the chromosome. Functionally, recruited co-dependently with zhp-2 to the synaptonemal complex between homologous chromosome pairs to regulate the formation and number of crossover events between homologs during meiotic recombination. Together with zhp-2, promotes the accumulation of pro-crossover proteins, including zhp-3 and zhp-4, at a designated crossover site along the recombination intermediate. Limits the number of crossover sites along a recombination intermediate by restricting the association of these pro-crossover proteins with other recombination sites during late prophase. Also, together with zhp-2, plays a role in chromosome remodeling following crossover formation to promote two successive rounds of chromosome segregation during meiosis. The protein is Zip homologous protein 1 of Caenorhabditis elegans.